The sequence spans 155 residues: Ribosomal RNA large subunit methyltransferase H (155 aa).

Residues L72, G103, and 122-127 (LGRMVW) each bind S-adenosyl-L-methionine.

Belongs to the RNA methyltransferase RlmH family. As to quaternary structure, homodimer.

Its subcellular location is the cytoplasm. It carries out the reaction pseudouridine(1915) in 23S rRNA + S-adenosyl-L-methionine = N(3)-methylpseudouridine(1915) in 23S rRNA + S-adenosyl-L-homocysteine + H(+). In terms of biological role, specifically methylates the pseudouridine at position 1915 (m3Psi1915) in 23S rRNA. The polypeptide is Ribosomal RNA large subunit methyltransferase H (Cereibacter sphaeroides (strain KD131 / KCTC 12085) (Rhodobacter sphaeroides)).